Reading from the N-terminus, the 281-residue chain is Pantothenate synthetase (281 aa).

30–37 (MGALHRGH) is an ATP binding site. His-37 (proton donor) is an active-site residue. Gln-61 contributes to the (R)-pantoate binding site. Residue Gln-61 coordinates beta-alanine. 147-150 (GEKD) serves as a coordination point for ATP. Gln-153 is a binding site for (R)-pantoate. ATP contacts are provided by residues Ile-176 and 184–187 (LSSR).

Belongs to the pantothenate synthetase family. Homodimer.

The protein resides in the cytoplasm. It carries out the reaction (R)-pantoate + beta-alanine + ATP = (R)-pantothenate + AMP + diphosphate + H(+). It participates in cofactor biosynthesis; (R)-pantothenate biosynthesis; (R)-pantothenate from (R)-pantoate and beta-alanine: step 1/1. Functionally, catalyzes the condensation of pantoate with beta-alanine in an ATP-dependent reaction via a pantoyl-adenylate intermediate. This chain is Pantothenate synthetase, found in Porphyromonas gingivalis (strain ATCC BAA-308 / W83).